A 1213-amino-acid chain; its full sequence is DNA-directed RNA polymerase subunit beta' (1213 aa).

The Zn(2+) site is built by Cys60, Cys62, Cys75, and Cys78. The Mg(2+) site is built by Asp450, Asp452, and Asp454. Cys819, Cys893, Cys900, and Cys903 together coordinate Zn(2+).

The protein belongs to the RNA polymerase beta' chain family. As to quaternary structure, the RNAP catalytic core consists of 2 alpha, 1 beta, 1 beta' and 1 omega subunit. When a sigma factor is associated with the core the holoenzyme is formed, which can initiate transcription. It depends on Mg(2+) as a cofactor. Zn(2+) is required as a cofactor.

It carries out the reaction RNA(n) + a ribonucleoside 5'-triphosphate = RNA(n+1) + diphosphate. DNA-dependent RNA polymerase catalyzes the transcription of DNA into RNA using the four ribonucleoside triphosphates as substrates. The polypeptide is DNA-directed RNA polymerase subunit beta' (Streptococcus pyogenes serotype M1).